We begin with the raw amino-acid sequence, 223 residues long: Guanylate kinase (223 aa).

The interval 1 to 22 (MTADGGPDVRHGTRPEPSGDGR) is disordered. The span at 7-19 (PDVRHGTRPEPSG) shows a compositional bias: basic and acidic residues. The 181-residue stretch at 21–201 (GRVVVLSGPS…ACAELVSLLV (181 aa)) folds into the Guanylate kinase-like domain. 28–35 (GPSAVGKS) serves as a coordination point for ATP. The tract at residues 204-223 (APDRHDTSGRTGRQTTSHPD) is disordered. Residues 212–223 (GRTGRQTTSHPD) show a composition bias toward polar residues.

This sequence belongs to the guanylate kinase family.

It is found in the cytoplasm. The enzyme catalyses GMP + ATP = GDP + ADP. In terms of biological role, essential for recycling GMP and indirectly, cGMP. This chain is Guanylate kinase, found in Mycolicibacterium paratuberculosis (strain ATCC BAA-968 / K-10) (Mycobacterium paratuberculosis).